The chain runs to 483 residues: ATP synthase subunit beta (483 aa).

169–176 (GGAGVGKT) is a binding site for ATP.

This sequence belongs to the ATPase alpha/beta chains family. F-type ATPases have 2 components, CF(1) - the catalytic core - and CF(0) - the membrane proton channel. CF(1) has five subunits: alpha(3), beta(3), gamma(1), delta(1), epsilon(1). CF(0) has three main subunits: a(1), b(2) and c(9-12). The alpha and beta chains form an alternating ring which encloses part of the gamma chain. CF(1) is attached to CF(0) by a central stalk formed by the gamma and epsilon chains, while a peripheral stalk is formed by the delta and b chains.

Its subcellular location is the cell membrane. The catalysed reaction is ATP + H2O + 4 H(+)(in) = ADP + phosphate + 5 H(+)(out). Its function is as follows. Produces ATP from ADP in the presence of a proton gradient across the membrane. The catalytic sites are hosted primarily by the beta subunits. In Corynebacterium glutamicum (strain R), this protein is ATP synthase subunit beta.